The following is a 512-amino-acid chain: Glycerol kinase (512 aa).

T13 is an ADP binding site. T13, T14, and S15 together coordinate ATP. T13 is a binding site for sn-glycerol 3-phosphate. ADP is bound at residue R17. Sn-glycerol 3-phosphate contacts are provided by R83, E84, Y135, and D252. Positions 83, 84, 135, 252, and 253 each coordinate glycerol. ADP contacts are provided by T274 and G318. ATP contacts are provided by T274, G318, Q322, and G419. 2 residues coordinate ADP: G419 and N423.

The protein belongs to the FGGY kinase family.

It carries out the reaction glycerol + ATP = sn-glycerol 3-phosphate + ADP + H(+). It participates in polyol metabolism; glycerol degradation via glycerol kinase pathway; sn-glycerol 3-phosphate from glycerol: step 1/1. Its activity is regulated as follows. Inhibited by fructose 1,6-bisphosphate (FBP). Key enzyme in the regulation of glycerol uptake and metabolism. Catalyzes the phosphorylation of glycerol to yield sn-glycerol 3-phosphate. The protein is Glycerol kinase of Corynebacterium kroppenstedtii (strain DSM 44385 / JCM 11950 / CIP 105744 / CCUG 35717).